The chain runs to 329 residues: Phosphate acyltransferase (329 aa).

Belongs to the PlsX family. As to quaternary structure, homodimer. Probably interacts with PlsY.

The protein localises to the cytoplasm. It carries out the reaction a fatty acyl-[ACP] + phosphate = an acyl phosphate + holo-[ACP]. It functions in the pathway lipid metabolism; phospholipid metabolism. In terms of biological role, catalyzes the reversible formation of acyl-phosphate (acyl-PO(4)) from acyl-[acyl-carrier-protein] (acyl-ACP). This enzyme utilizes acyl-ACP as fatty acyl donor, but not acyl-CoA. The sequence is that of Phosphate acyltransferase from Campylobacter fetus subsp. fetus (strain 82-40).